The sequence spans 342 residues: Platelet-activating factor receptor (342 aa).

At 1 to 16 (MEPHDSSHMDSEFRYT) the chain is on the extracellular side. A helical transmembrane segment spans residues 17-38 (LFPIVYSIIFVLGVIANGYVLW). At 39–54 (VFARLYPCKKFNEIKI) the chain is on the cytoplasmic side. The chain crosses the membrane as a helical span at residues 55 to 74 (FMVNLTMADMLFLITLPLWI). The Extracellular portion of the chain corresponds to 75 to 91 (VYYQNQGNWILPKFLCN). Cysteine 90 and cysteine 173 are oxidised to a cystine. The helical transmembrane segment at 92 to 113 (VAGCLFFINTYCSVAFLGVITY) threads the bilayer. Residues 114-133 (NRFQAVTRPIKTAQANTRKR) are Cytoplasmic-facing. Residues 134–155 (GISLSLVIWVAIVGAASYFLIL) form a helical membrane-spanning segment. The Extracellular portion of the chain corresponds to 156–184 (DSTNTVPDSAGSGNVTRCFEHYEKGSVPV). Residue asparagine 169 is glycosylated (N-linked (GlcNAc...) asparagine). Residues 185-205 (LIIHIFIVFSFFLVFLIILFC) form a helical membrane-spanning segment. Residues 206 to 233 (NLVIIRTLLMQPVQQQRNAEVKRRALWM) are Cytoplasmic-facing. Residues 234 to 254 (VCTVLAVFIICFVPHHVVQLP) form a helical membrane-spanning segment. Topologically, residues 255-276 (WTLAELGFQDSKFHQAINDAHQ) are extracellular. The helical transmembrane segment at 277-296 (VTLCLLSTNCVLDPVIYCFL) threads the bilayer. Residues 297 to 342 (TKKFRKHLTEKFYSMRSSRKCSRATTDTVTEVVVPFNQIPGNSLKN) are Cytoplasmic-facing.

This sequence belongs to the G-protein coupled receptor 1 family. As to quaternary structure, interacts with ARRB1. In terms of tissue distribution, expressed in the placenta, lung, left and right heart ventricles, heart atrium, leukocytes and differentiated HL-60 granulocytes.

Its subcellular location is the cell membrane. Functionally, receptor for platelet activating factor, a chemotactic phospholipid mediator that possesses potent inflammatory, smooth-muscle contractile and hypotensive activity. Seems to mediate its action via a G protein that activates a phosphatidylinositol-calcium second messenger system. This chain is Platelet-activating factor receptor (PTAFR), found in Homo sapiens (Human).